The following is a 218-amino-acid chain: Large ribosomal subunit protein uL3 (218 aa).

Belongs to the universal ribosomal protein uL3 family. As to quaternary structure, part of the 50S ribosomal subunit. Forms a cluster with proteins L14 and L19.

One of the primary rRNA binding proteins, it binds directly near the 3'-end of the 23S rRNA, where it nucleates assembly of the 50S subunit. The sequence is that of Large ribosomal subunit protein uL3 from Rhodococcus jostii (strain RHA1).